A 514-amino-acid chain; its full sequence is Glutathione-binding protein GsiB (514 aa).

Positions 1–27 (MSVMTIQRRWLVAAGVTAAMVASPVWA) are cleaved as a signal peptide.

Belongs to the bacterial solute-binding protein 5 family. The complex is composed of two ATP-binding proteins (GsiA), two transmembrane proteins (GsiC and GsiD) and a solute-binding protein (GsiB).

The protein localises to the periplasm. Part of the ABC transporter complex GsiABCD involved in glutathione import. Binds glutathione. This Pectobacterium atrosepticum (strain SCRI 1043 / ATCC BAA-672) (Erwinia carotovora subsp. atroseptica) protein is Glutathione-binding protein GsiB.